We begin with the raw amino-acid sequence, 110 residues long: Phosphoribosyl-ATP pyrophosphatase (110 aa).

This sequence belongs to the PRA-PH family.

It is found in the cytoplasm. The enzyme catalyses 1-(5-phospho-beta-D-ribosyl)-ATP + H2O = 1-(5-phospho-beta-D-ribosyl)-5'-AMP + diphosphate + H(+). It participates in amino-acid biosynthesis; L-histidine biosynthesis; L-histidine from 5-phospho-alpha-D-ribose 1-diphosphate: step 2/9. This is Phosphoribosyl-ATP pyrophosphatase from Pseudomonas fluorescens (strain SBW25).